Consider the following 78-residue polypeptide: MKLTCMMFVAVLFLTASVFITADDSRNGIENLPRMRRHEMKNPKASKLNKRQCRVEGEICGMLFEAQCCDGWCFFVCM.

Residues 1–22 form the signal peptide; that stretch reads MKLTCMMFVAVLFLTASVFITA. Residues 23 to 51 constitute a propeptide that is removed on maturation; sequence DDSRNGIENLPRMRRHEMKNPKASKLNKR. At Gln-52 the chain carries Pyrrolidone carboxylic acid. 3 disulfide bridges follow: Cys-53–Cys-69, Cys-60–Cys-73, and Cys-68–Cys-77.

The protein belongs to the conotoxin O1 superfamily. As to expression, expressed by the venom duct.

It localises to the secreted. This chain is Conotoxin 1, found in Conus imperialis (Imperial cone).